A 336-amino-acid polypeptide reads, in one-letter code: Sulfate/thiosulfate import ATP-binding protein CysA (336 aa).

The ABC transporter domain occupies 3–233 (ITIENVSKSF…PASPFVMSFI (231 aa)). ATP is bound at residue 35-42 (GPSGSGKS).

It belongs to the ABC transporter superfamily. Sulfate/tungstate importer (TC 3.A.1.6) family. In terms of assembly, the complex is composed of two ATP-binding proteins (CysA), two transmembrane proteins (CysT and CysW) and a solute-binding protein (CysP).

The protein resides in the cell inner membrane. The enzyme catalyses sulfate(out) + ATP + H2O = sulfate(in) + ADP + phosphate + H(+). It carries out the reaction thiosulfate(out) + ATP + H2O = thiosulfate(in) + ADP + phosphate + H(+). Functionally, part of the ABC transporter complex CysAWTP involved in sulfate/thiosulfate import. Responsible for energy coupling to the transport system. This Thermosynechococcus vestitus (strain NIES-2133 / IAM M-273 / BP-1) protein is Sulfate/thiosulfate import ATP-binding protein CysA.